A 282-amino-acid chain; its full sequence is NADPH-dependent 7-cyano-7-deazaguanine reductase (282 aa).

88-90 (IES) contributes to the substrate binding site. Residue 90-91 (SK) coordinates NADPH. Catalysis depends on C190, which acts as the Thioimide intermediate. The Proton donor role is filled by D197. 229–230 (HE) contacts substrate. Residue 258 to 259 (RG) participates in NADPH binding.

It belongs to the GTP cyclohydrolase I family. QueF type 2 subfamily. As to quaternary structure, homodimer.

The protein resides in the cytoplasm. The enzyme catalyses 7-aminomethyl-7-carbaguanine + 2 NADP(+) = 7-cyano-7-deazaguanine + 2 NADPH + 3 H(+). The protein operates within tRNA modification; tRNA-queuosine biosynthesis. In terms of biological role, catalyzes the NADPH-dependent reduction of 7-cyano-7-deazaguanine (preQ0) to 7-aminomethyl-7-deazaguanine (preQ1). This is NADPH-dependent 7-cyano-7-deazaguanine reductase from Salmonella paratyphi C (strain RKS4594).